The following is a 156-amino-acid chain: Ribosomal RNA large subunit methyltransferase H (156 aa).

S-adenosyl-L-methionine-binding positions include leucine 73, glycine 104, and 123–128 (LSPLTL).

The protein belongs to the RNA methyltransferase RlmH family. As to quaternary structure, homodimer.

Its subcellular location is the cytoplasm. It catalyses the reaction pseudouridine(1915) in 23S rRNA + S-adenosyl-L-methionine = N(3)-methylpseudouridine(1915) in 23S rRNA + S-adenosyl-L-homocysteine + H(+). Functionally, specifically methylates the pseudouridine at position 1915 (m3Psi1915) in 23S rRNA. This chain is Ribosomal RNA large subunit methyltransferase H, found in Aliivibrio fischeri (strain MJ11) (Vibrio fischeri).